The chain runs to 150 residues: CCAAT/enhancer-binding protein gamma (150 aa).

Residue Lys-3 forms a Glycyl lysine isopeptide (Lys-Gly) (interchain with G-Cter in SUMO2) linkage. A disordered region spans residues 27 to 94; sequence GLQQVPQLVP…QKAQDTLQRV (68 aa). Low complexity predominate over residues 28 to 37; the sequence is LQQVPQLVPA. Positions 56–72 are enriched in basic and acidic residues; the sequence is SPMDRNSDEYRQRRERN. The bZIP domain maps to 62–125; it reads SDEYRQRRER…SVLKDLFLEH (64 aa). The tract at residues 66-93 is basic motif; the sequence is RQRRERNNMAVKKSRLKSKQKAQDTLQR. The tract at residues 97 to 118 is leucine-zipper; that stretch reads LKEENERLEAKIKLLTKELSVL.

It belongs to the bZIP family. C/EBP subfamily. In terms of assembly, binds DNA as a dimer and can form stable heterodimers with CEBPA and CEBPB. Interacts with ZNF638; this interaction increases transcriptional activation.

It is found in the nucleus. Functionally, transcription factor that binds to the promoter and the enhancer regions of target genes. Binds to the enhancer element PRE-I (positive regulatory element-I) of the IL-4 gene. Binds to the promoter and the enhancer of the immunoglobulin heavy chain. Binds to GPE1, a cis-acting element in the G-CSF gene promoter. In Homo sapiens (Human), this protein is CCAAT/enhancer-binding protein gamma (CEBPG).